Consider the following 339-residue polypeptide: Ketol-acid reductoisomerase (NADP(+)) (339 aa).

One can recognise a KARI N-terminal Rossmann domain in the interval 1 to 182 (MRVYYDRDAD…GGGRSGIIET (182 aa)). NADP(+) is bound by residues 24-27 (YGSQ), K48, S51, T53, and 83-86 (DELQ). The active site involves H108. G134 contributes to the NADP(+) binding site. Residues 183–328 (NFKEECETDL…AKLRAMMPWI (146 aa)) enclose the KARI C-terminal knotted domain. Mg(2+)-binding residues include D191, E195, E227, and E231. S252 is a substrate binding site.

Belongs to the ketol-acid reductoisomerase family. Mg(2+) is required as a cofactor.

It catalyses the reaction (2R)-2,3-dihydroxy-3-methylbutanoate + NADP(+) = (2S)-2-acetolactate + NADPH + H(+). The enzyme catalyses (2R,3R)-2,3-dihydroxy-3-methylpentanoate + NADP(+) = (S)-2-ethyl-2-hydroxy-3-oxobutanoate + NADPH + H(+). It participates in amino-acid biosynthesis; L-isoleucine biosynthesis; L-isoleucine from 2-oxobutanoate: step 2/4. The protein operates within amino-acid biosynthesis; L-valine biosynthesis; L-valine from pyruvate: step 2/4. Functionally, involved in the biosynthesis of branched-chain amino acids (BCAA). Catalyzes an alkyl-migration followed by a ketol-acid reduction of (S)-2-acetolactate (S2AL) to yield (R)-2,3-dihydroxy-isovalerate. In the isomerase reaction, S2AL is rearranged via a Mg-dependent methyl migration to produce 3-hydroxy-3-methyl-2-ketobutyrate (HMKB). In the reductase reaction, this 2-ketoacid undergoes a metal-dependent reduction by NADPH to yield (R)-2,3-dihydroxy-isovalerate. This Rhizobium meliloti (strain 1021) (Ensifer meliloti) protein is Ketol-acid reductoisomerase (NADP(+)).